The primary structure comprises 352 residues: Pejvakin (352 aa).

It belongs to the gasdermin family. In terms of assembly, interacts with MAP1LC3B; interaction is direct. Interacts with IQGAP1. Interacts with ROCK2. Interacts with TRIOBP. In terms of tissue distribution, in ear, it is detected in the organ of Corti and the spiral ganglion within the cochlea in the sensory areas of the vestibule (cristae ampullares of the semicircular ducts, and maculae of the saccule and utricle) and in the first 3 relays (cochlear nuclei, superior olivary complex and inferior colliculus) of the afferent auditory pathway. Detected in hair cells of the cochlea and vestibule but not in neurons. In the afferent auditory pathway, it is present in the cell bodies of neurons but not in fiber bundles such as the trapezoid body in the brainstem. Also detected in spiral ganglion cells, which form the auditory nerve and project to the cochlear nuclei in the brainstem. Also present in the cochlear nuclei, the superior olive and the inferior colliculus (at protein level). Expressed in all the adult organs tested: brain, eye, inner ear, heart, lung, kidney, liver, intestine, testis and weakly in skeletal muscle.

The protein resides in the peroxisome membrane. It is found in the cell projection. Its subcellular location is the cilium. Functionally, peroxisome-associated protein required to protect auditory hair cells against noise-induced damage. Acts by regulating noise-induced peroxisome proliferation in auditory hair cells and neurons, and promoting autophagic degradation of damaged peroxisomes (pexophagy). Noise overexposure increases reactive oxygen species (ROS) levels, causing oxidative damage to auditory hair cells and resulting in hearing loss. PJVK acts as a ROS sensor that recruits the autophagy machinery to trigger pexophagy of peroxisomes damaged by oxidative stress. In addition to pexophagy, also required to promote peroxisome proliferation in response to sound overstimulation. This Mus musculus (Mouse) protein is Pejvakin.